Consider the following 147-residue polypeptide: MNWTAATCWALLLAAAFLCDSCSAKGGRGGARGSARGVRGGARGASRVRVRPAPRYGSSLRVAAAGAAAGAAAGVAAGLATGSGWRRTSGPGELGLEDDENGAMGGNGTDRGVYSYWAWTSGSGSVHSPRICLLLGGTLGALELLRP.

A signal peptide spans 1-24; that stretch reads MNWTAATCWALLLAAAFLCDSCSA. The span at 26-43 shows a compositional bias: gly residues; it reads GGRGGARGSARGVRGGAR. The interval 26–45 is disordered; sequence GGRGGARGSARGVRGGARGA. Residue asparagine 107 is glycosylated (N-linked (GlcNAc...) asparagine). Glycine 122 is lipidated: GPI-anchor amidated glycine. A propeptide spans 123-147 (removed in mature form); it reads SGSVHSPRICLLLGGTLGALELLRP.

Belongs to the SPRN family. N-glycosylated. Mainly expressed in brain (at protein level). In brain, it is highly expressed in the hippocampus and cerebellum and is also expressed at lower level in other areas of the brain including the cerebral cortex, the thalamus and the medulla. In hippocampus and cerebellum it is highly expressed in the cell bodies of pyramidal cells and Purkinje cells, respectively.

It localises to the cell membrane. In terms of biological role, prion-like protein that has PrP(C)-like neuroprotective activity. May act as a modulator for the biological actions of normal and abnormal PrP. This chain is Shadow of prion protein (Sprn), found in Mus musculus (Mouse).